The chain runs to 306 residues: Homoserine kinase (306 aa).

91–101 (PLARGLGSSAT) lines the ATP pocket.

Belongs to the GHMP kinase family. Homoserine kinase subfamily.

It localises to the cytoplasm. The enzyme catalyses L-homoserine + ATP = O-phospho-L-homoserine + ADP + H(+). Its pathway is amino-acid biosynthesis; L-threonine biosynthesis; L-threonine from L-aspartate: step 4/5. In terms of biological role, catalyzes the ATP-dependent phosphorylation of L-homoserine to L-homoserine phosphate. In Synechocystis sp. (strain ATCC 27184 / PCC 6803 / Kazusa), this protein is Homoserine kinase.